The sequence spans 261 residues: MDTRLIAIATFVVTFGILIVLKRLNYIESWDTFSILSILAAVLTIAAYFFTLVLFPQDYDQLKKEILDEINESLKNYEIYFKCKDFKKPIVKDGAVRIDKCVVMATKLNLTDHGYIVDLKFRSNWMDSKGTHAILFIDGDDAQINLFEREGEIFYIIKSKNKISGVYIQLKSVKWFDEAFSDNWNNIKIMWDTSKDEIWLEINGIRVSKKLNFDFNLNDSVIYLGSNPLEDTYAEGYFDRIMVYKSADTADFGTPTVRRFE.

Helical transmembrane passes span 4–21 (RLIAIATFVVTFGILIVL) and 33–55 (FSILSILAAVLTIAAYFFTLVLF).

It is found in the cell membrane. This is an uncharacterized protein from Archaeoglobus fulgidus (strain ATCC 49558 / DSM 4304 / JCM 9628 / NBRC 100126 / VC-16).